Reading from the N-terminus, the 317-residue chain is Metaxin-1 (317 aa).

Residues lysine 38, lysine 41, and lysine 78 each participate in a glycyl lysine isopeptide (Lys-Gly) (interchain with G-Cter in ubiquitin) cross-link. The chain crosses the membrane as a helical span at residues 164–184 (EELEKELYQEARECLTLLSQR).

The protein belongs to the metaxin family. As to quaternary structure, interacts with MTX2/metaxin-2. Associates with the mitochondrial contact site and cristae organizing system (MICOS) complex, composed of at least MICOS10/MIC10, CHCHD3/MIC19, CHCHD6/MIC25, APOOL/MIC27, IMMT/MIC60, APOO/MIC23/MIC26 and QIL1/MIC13. This complex was also known under the names MINOS or MitOS complex. The MICOS complex associates with mitochondrial outer membrane proteins SAMM50, MTX1 and MTX2 (together described as components of the mitochondrial outer membrane sorting assembly machinery (SAM) complex) and DNAJC11, mitochondrial inner membrane protein TMEM11 and with HSPA9. The MICOS and SAM complexes together with DNAJC11 are part of a large protein complex spanning both membranes termed the mitochondrial intermembrane space bridging (MIB) complex. Interacts with ARMC1. Ubiquitinated by PRKN during mitophagy, leading to its degradation and enhancement of mitophagy. Deubiquitinated by USP30.

The protein localises to the mitochondrion outer membrane. Involved in transport of proteins into the mitochondrion. Essential for embryonic development. The polypeptide is Metaxin-1 (MTX1) (Sus scrofa (Pig)).